Here is a 362-residue protein sequence, read N- to C-terminus: GTPase Obg (362 aa).

In terms of domain architecture, Obg spans 1-159 (MKFLDEAKVY…KTIWLRLKLI (159 aa)). One can recognise an OBG-type G domain in the interval 160 to 327 (ADAGLVGLPN…VLRALRDVIV (168 aa)). Residues 166 to 173 (GLPNAGKS), 191 to 195 (FTTLH), 212 to 215 (DIPG), 279 to 282 (SQID), and 308 to 310 (SAV) contribute to the GTP site. Mg(2+) contacts are provided by serine 173 and threonine 193. Positions 332-362 (EEKPAKVPKLRHRDMIVSDEGEGEDGADDQP) are disordered. Residues 348 to 362 (VSDEGEGEDGADDQP) are compositionally biased toward acidic residues.

This sequence belongs to the TRAFAC class OBG-HflX-like GTPase superfamily. OBG GTPase family. In terms of assembly, monomer. It depends on Mg(2+) as a cofactor.

It localises to the cytoplasm. In terms of biological role, an essential GTPase which binds GTP, GDP and possibly (p)ppGpp with moderate affinity, with high nucleotide exchange rates and a fairly low GTP hydrolysis rate. Plays a role in control of the cell cycle, stress response, ribosome biogenesis and in those bacteria that undergo differentiation, in morphogenesis control. This is GTPase Obg from Rhizobium etli (strain CIAT 652).